We begin with the raw amino-acid sequence, 267 residues long: Serine/threonine-protein kinase 1 (267 aa).

The region spanning 18–266 (IQNNVRLVDG…YETVIKHSFL (249 aa)) is the Protein kinase domain. ATP is bound by residues 24-32 (LVDGKFGKM) and Lys-47. Catalysis depends on Asp-134, which acts as the Proton acceptor.

It belongs to the protein kinase superfamily. Ser/Thr protein kinase family.

It carries out the reaction L-seryl-[protein] + ATP = O-phospho-L-seryl-[protein] + ADP + H(+). It catalyses the reaction L-threonyl-[protein] + ATP = O-phospho-L-threonyl-[protein] + ADP + H(+). The chain is Serine/threonine-protein kinase 1 (PK1) from Heliothis zea nuclear polyhedrosis virus (HzSNPV).